The following is a 395-amino-acid chain: Multidrug resistance protein MdtL (395 aa).

12 helical membrane-spanning segments follow: residues 4-24 (FLLC…MYLV), 42-62 (IAFS…GKIA), 69-89 (PVAI…SRAS), 93-113 (LFLS…VVAF), 131-151 (LLNG…HLIM), 158-178 (SLFY…LFIL), 217-237 (VSVI…VMGF), 247-267 (ALTA…LGLF), 271-291 (TLML…SLAH), 295-315 (VTLF…GVAM), 328-350 (VASS…LAAI), and 355-377 (AMNM…IFSV).

The protein belongs to the major facilitator superfamily. DHA1 family. MdtL (TC 2.A.1.2.22) subfamily.

The protein resides in the cell inner membrane. In Salmonella schwarzengrund (strain CVM19633), this protein is Multidrug resistance protein MdtL.